The primary structure comprises 65 residues: Large ribosomal subunit protein bL35 (65 aa).

Residues M1–I22 form a disordered region.

The protein belongs to the bacterial ribosomal protein bL35 family.

In Flavobacterium johnsoniae (strain ATCC 17061 / DSM 2064 / JCM 8514 / BCRC 14874 / CCUG 350202 / NBRC 14942 / NCIMB 11054 / UW101) (Cytophaga johnsonae), this protein is Large ribosomal subunit protein bL35.